Here is a 113-residue protein sequence, read N- to C-terminus: Nucleoid-associated protein CLH_3225 (113 aa).

Gly residues predominate over residues 1–14; the sequence is MAKGGFPGGFGGGN. The tract at residues 1 to 31 is disordered; it reads MAKGGFPGGFGGGNMNNLMKQAQKLQKQMED.

It belongs to the YbaB/EbfC family. As to quaternary structure, homodimer.

The protein resides in the cytoplasm. Its subcellular location is the nucleoid. Functionally, binds to DNA and alters its conformation. May be involved in regulation of gene expression, nucleoid organization and DNA protection. In Clostridium botulinum (strain Alaska E43 / Type E3), this protein is Nucleoid-associated protein CLH_3225.